Here is a 476-residue protein sequence, read N- to C-terminus: Aspartyl/glutamyl-tRNA(Asn/Gln) amidotransferase subunit B (476 aa).

It belongs to the GatB/GatE family. GatB subfamily. Heterotrimer of A, B and C subunits.

It carries out the reaction L-glutamyl-tRNA(Gln) + L-glutamine + ATP + H2O = L-glutaminyl-tRNA(Gln) + L-glutamate + ADP + phosphate + H(+). It catalyses the reaction L-aspartyl-tRNA(Asn) + L-glutamine + ATP + H2O = L-asparaginyl-tRNA(Asn) + L-glutamate + ADP + phosphate + 2 H(+). Functionally, allows the formation of correctly charged Asn-tRNA(Asn) or Gln-tRNA(Gln) through the transamidation of misacylated Asp-tRNA(Asn) or Glu-tRNA(Gln) in organisms which lack either or both of asparaginyl-tRNA or glutaminyl-tRNA synthetases. The reaction takes place in the presence of glutamine and ATP through an activated phospho-Asp-tRNA(Asn) or phospho-Glu-tRNA(Gln). The polypeptide is Aspartyl/glutamyl-tRNA(Asn/Gln) amidotransferase subunit B (Listeria innocua serovar 6a (strain ATCC BAA-680 / CLIP 11262)).